Reading from the N-terminus, the 282-residue chain is Aminoglycoside 6-adenylyltransferase (282 aa).

It carries out the reaction streptomycin + ATP = 6-O-adenylylstreptomycin + diphosphate. Its function is as follows. Required for streptomycin resistance. Adenylates streptomycin on the O-6 residue. In Staphylococcus aureus, this protein is Aminoglycoside 6-adenylyltransferase.